The following is a 212-amino-acid chain: Ras-related protein Rab-2A (212 aa).

An N-acetylalanine modification is found at Ala2. Residues 2 to 19 (AYAYLFKYIIIGDTGVGK) are required for interaction with PRKCI. Residues Gly16, Val17, Gly18, Lys19, Ser20, Cys21, and Thr38 each contribute to the GTP site. Ser20 provides a ligand contact to Mg(2+). The Switch 1 motif lies at 37–42 (LTIGVE). Residues Thr38 and Asp61 each contribute to the Mg(2+) site. The Switch 2 signature appears at 63–72 (AGQESFRSIT). GTP contacts are provided by Gly64, Asn119, Lys120, Asp122, Ala150, and Lys151. Residues 190-212 (QHAATNASHGSNQGGQQAGGGCC) are disordered. Residues 201-212 (NQGGQQAGGGCC) are compositionally biased toward gly residues. 2 S-geranylgeranyl cysteine lipidation sites follow: Cys211 and Cys212.

This sequence belongs to the small GTPase superfamily. Rab family. As to quaternary structure, interacts with PRKCI. Interacts with TRIP11. Interacts (in GTP-bound form) with GARIN1B. Interacts (GTP-bound) with HOPS complex component VPS39; interaction contributes to obtaining a functional HOPS complex that promotes autophagosome-lysosome membrane fusion driven by STX17-SNAP29-VAMP8. Interacts with VPS41. Mg(2+) serves as cofactor. In terms of processing, prenylated. Prenylation is required for association with cellular membranes.

It localises to the endoplasmic reticulum-Golgi intermediate compartment membrane. The protein localises to the melanosome. It is found in the endoplasmic reticulum membrane. The protein resides in the golgi apparatus membrane. Its subcellular location is the cytoplasmic vesicle. It localises to the secretory vesicle. The protein localises to the acrosome. It is found in the autophagosome membrane. The enzyme catalyses GTP + H2O = GDP + phosphate + H(+). Its activity is regulated as follows. Regulated by guanine nucleotide exchange factors (GEFs) which promote the exchange of bound GDP for free GTP, GTPase activating proteins (GAPs) which increase the GTP hydrolysis activity, and GDP dissociation inhibitors (GDIs) which inhibit the dissociation of the nucleotide from the GTPase. In terms of biological role, the small GTPases Rab are key regulators of intracellular membrane trafficking, from the formation of transport vesicles to their fusion with membranes. Rabs cycle between active GTP-bound and inactive GDP-bound states. In their active state, drive transport of vesicular carriers from donor organelles to acceptor organelles to regulate the membrane traffic that maintains organelle identity and morphology. RAB2A regulates autophagy by promoting autophagosome-lysosome fusion via recruitment of the HOPS endosomal tethering complex; this process involves autophagosomal RAB2A and lysosomal RAB39A recruitment of HOPS subcomplexes VPS39-VPS11 and VPS41-VPS16-VPS18-VPS33A, respectively, which assemble into a functional complex to mediate membrane tethering and SNAREs-driven membrane fusion. Required for protein transport from the endoplasmic reticulum to the Golgi complex. Regulates the compacted morphology of the Golgi. Together with RAB2B, redundantly required for efficient autophagic flux. This is Ras-related protein Rab-2A from Mus musculus (Mouse).